The sequence spans 65 residues: Conotoxin TsMRCL-04 (65 aa).

The signal sequence occupies residues 1-20 (MRCLPVFIILLLLIPSAASA). Positions 21–48 (AQPETKDDAALASFYDNAKRTLQRHWAK) are excised as a propeptide. Glutamate 63 carries the glutamic acid 1-amide modification.

This sequence belongs to the conotoxin T superfamily. Post-translationally, contains 2 disulfide bonds that can be either 'C1-C3, C2-C4' or 'C1-C4, C2-C3', since these disulfide connectivities have been observed for conotoxins with cysteine framework V (for examples, see AC P0DQQ7 and AC P81755). As to expression, expressed by the venom duct.

The protein resides in the secreted. The sequence is that of Conotoxin TsMRCL-04 from Conus tessulatus (Tessellate cone).